The primary structure comprises 295 residues: GTP cyclohydrolase FolE2 (295 aa).

It belongs to the GTP cyclohydrolase IV family.

The catalysed reaction is GTP + H2O = 7,8-dihydroneopterin 3'-triphosphate + formate + H(+). It participates in cofactor biosynthesis; 7,8-dihydroneopterin triphosphate biosynthesis; 7,8-dihydroneopterin triphosphate from GTP: step 1/1. Converts GTP to 7,8-dihydroneopterin triphosphate. The chain is GTP cyclohydrolase FolE2 from Pseudomonas putida (strain W619).